A 2410-amino-acid chain; its full sequence is Coprinoferrin synthetase (2410 aa).

Residues 237–646 form an adenylation 1 region; the sequence is LERRAKTNPH…GRIDTQIKVR (410 aa). In terms of domain architecture, Carrier 1 spans 783–860; the sequence is RDCTPLEAEV…DIAQLVHVST (78 aa). Position 820 is an O-(pantetheine 4'-phosphoryl)serine (Ser-820). The interval 891–1260 is condensation 1; the sequence is DILPPFPVQE…SVEAVVNVHD (370 aa). Positions 1298–1317 are disordered; that stretch reads ELPLPSRRSPEPVRKVNDDE. A compositionally biased stretch (basic and acidic residues) spans 1305–1314; the sequence is RSPEPVRKVN. One can recognise a Carrier 2 domain in the interval 1324 to 1400; sequence LLDPVVVADL…RLARVVSNNK (77 aa). Ser-1361 bears the O-(pantetheine 4'-phosphoryl)serine mark. Positions 1436-1839 are condensation 2; sequence IIPSTALQSG…RIGRTFSVPS (404 aa). Residues 1858 to 1932 enclose the Carrier 3 domain; it reads VQAGIIHPVL…DLVLQATEIK (75 aa). Ser-1893 is subject to O-(pantetheine 4'-phosphoryl)serine. A condensation 3 region spans residues 1992 to 2315; the sequence is FQYLFTFKLP…TPIFNVNVNV (324 aa).

Belongs to the NRP synthetase family.

Its pathway is siderophore biosynthesis. In terms of biological role, nonribosomal peptide synthase; part of the gene cluster that mediates the biosynthesis of coprinoferrin, an acylated tripeptide hydroxamate siderophore. The biosynthesis of coprinoferrin depends on the hydroxylation of ornithine to N(5)-hydroxyornithine, catalyzed by the monooxygenase cpf2. The second step, the acylation of N(5)-hydroxy-L-ornithine to yield N(5)-hexanoyl-N(5)-hydroxyl-L-ornithine is catalyzed by a not yet identified acyltransferase. Finally, assembly of coprinoferrin is catalyzed by the nonribosomal peptide synthase (NRPS) cpf1 via amide bond formation between three N(5)-hexanoyl-N(5)-hydroxyl-L-ornithine molecules to release the linear trimer. Interestingly, proteins seemingly not directly related to biosynthesis, such as transcription factors, replication factors, and autophagy-related proteins, are conserved among the clusters homologous to the coprinoferrin cluster, suggesting that the cluster may also play developmental and cell biological functions. The sequence is that of Coprinoferrin synthetase from Coprinopsis cinerea (strain Okayama-7 / 130 / ATCC MYA-4618 / FGSC 9003) (Inky cap fungus).